The following is a 155-amino-acid chain: Protein SprT-like (155 aa).

In terms of domain architecture, SprT-like spans 7–145 (QQHMEEVSLQ…GSCGGRLKQT (139 aa)). A Zn(2+)-binding site is contributed by histidine 67. Glutamate 68 is a catalytic residue. Histidine 71 contacts Zn(2+).

Belongs to the SprT family. Zn(2+) is required as a cofactor.

It is found in the cytoplasm. This is Protein SprT-like from Listeria innocua serovar 6a (strain ATCC BAA-680 / CLIP 11262).